Here is a 231-residue protein sequence, read N- to C-terminus: MIIRDLPLKLRDFPEKEKPRERLLHFGAEHLSNNELLAILLRTGTKHESVMNLAHRLLRTFDGLRLLKGASAQELSSIPGIGTVKAVQILAAIELGSRIHKTSAGEHCVIRSPEDGAKYVMEDMRFLSQEHFVCLYLNTKNQVIHKRTVFIGSLNSSIVHPREVFKEAFKRSAASFICVHNHPSGDPTPSREDIEVTRRLFECGNLIGIELLDHLVIGDKKFVSLKEKGYL.

The 123-residue stretch at 109 to 231 (VIRSPEDGAK…FVSLKEKGYL (123 aa)) folds into the MPN domain. Positions 180, 182, and 193 each coordinate Zn(2+). Residues 180 to 193 (HNHPSGDPTPSRED) carry the JAMM motif motif.

The protein belongs to the UPF0758 family.

The polypeptide is UPF0758 protein RBAM_025090 (Bacillus velezensis (strain DSM 23117 / BGSC 10A6 / LMG 26770 / FZB42) (Bacillus amyloliquefaciens subsp. plantarum)).